A 226-amino-acid chain; its full sequence is Acyl-protein thioesterase 1 homolog 1 (226 aa).

Active-site charge relay system residues include serine 121, aspartate 174, and histidine 206.

The protein belongs to the AB hydrolase superfamily. AB hydrolase 2 family.

It localises to the cytoplasm. The protein localises to the nucleus. It catalyses the reaction S-hexadecanoyl-L-cysteinyl-[protein] + H2O = L-cysteinyl-[protein] + hexadecanoate + H(+). Functionally, hydrolyzes fatty acids from S-acylated cysteine residues in proteins with a strong preference for palmitoylated G-alpha proteins over other acyl substrates. Mediates the deacylation of G-alpha proteins such as GPA1 in vivo, but has weak or no activity toward palmitoylated Ras proteins. Has weak lysophospholipase activity in vitro; however such activity may not exist in vivo. The protein is Acyl-protein thioesterase 1 homolog 1 of Dictyostelium discoideum (Social amoeba).